Reading from the N-terminus, the 122-residue chain is Putative TLX1 neighbor protein (122 aa).

The disordered stretch occupies residues 21–122; sequence SLLSQEAMGP…LGGGRGQRGQ (102 aa). A compositionally biased stretch (gly residues) spans 113–122; that stretch reads LGGGRGQRGQ.

This is Putative TLX1 neighbor protein (TLX1NB) from Homo sapiens (Human).